The primary structure comprises 399 residues: Elongation factor Tu (399 aa).

Residues 10-204 (KPHVNIGTIG…AVDASIPEPE (195 aa)) enclose the tr-type G domain. Residues 19 to 26 (GHVDHGKT) are G1. Residue 19 to 26 (GHVDHGKT) participates in GTP binding. T26 lines the Mg(2+) pocket. The segment at 60-64 (GITIN) is G2. The interval 81 to 84 (DCPG) is G3. GTP is bound by residues 81–85 (DCPGH) and 136–139 (NKCD). The G4 stretch occupies residues 136–139 (NKCD). Residues 174–176 (SGL) form a G5 region.

Belongs to the TRAFAC class translation factor GTPase superfamily. Classic translation factor GTPase family. EF-Tu/EF-1A subfamily. In terms of assembly, monomer.

Its subcellular location is the cytoplasm. It catalyses the reaction GTP + H2O = GDP + phosphate + H(+). GTP hydrolase that promotes the GTP-dependent binding of aminoacyl-tRNA to the A-site of ribosomes during protein biosynthesis. This Prochlorococcus marinus (strain SARG / CCMP1375 / SS120) protein is Elongation factor Tu.